We begin with the raw amino-acid sequence, 321 residues long: tRNA-5-methyluridine(54) 2-sulfurtransferase (321 aa).

4 residues coordinate Zn(2+): Cys-3, Cys-6, Cys-22, and His-25. ATP-binding positions include 53–55, Asp-59, and Ile-79; that span reads AVS. [4Fe-4S] cluster contacts are provided by Cys-130 and Cys-133. Lys-137 is covalently cross-linked (Glycyl lysine isopeptide (Lys-Gly) (interchain with G-Cter in TtuB)). ATP is bound by residues Gly-156 and Asp-161. Cys-222 serves as a coordination point for [4Fe-4S] cluster. Glycyl lysine isopeptide (Lys-Gly) (interchain with G-Cter in TtuB) cross-links involve residues Lys-226 and Lys-229. Zn(2+) is bound by residues Cys-274, Cys-277, Cys-286, and Cys-289.

This sequence belongs to the TtcA family. TtuA subfamily. As to quaternary structure, homodimer. Is able to form a heterocomplex with TtuB. [4Fe-4S] cluster serves as cofactor. Requires Mg(2+) as cofactor. In terms of processing, conjugated to TtuB via covalent linkages involving Lys-137, Lys-226 and Lys-229.

It carries out the reaction [TtuB sulfur-carrier protein]-C-terminal-Gly-aminoethanethioate + 5-methyluridine(54) in tRNA + ATP + H2O = [TtuB sulfur-carrier protein]-C-terminal Gly-Gly + 5-methyl-2-thiouridine(54) in tRNA + AMP + diphosphate + H(+). The protein operates within tRNA modification. Enzymatic activity may be regulated by TtuB conjugation. In terms of biological role, catalyzes the ATP-dependent 2-thiolation of 5-methyluridine residue at position 54 in the T loop of tRNAs, leading to 5-methyl-2-thiouridine (m(5)s(2)U or s(2)T). This modification allows thermal stabilization of tRNAs in thermophilic microorganisms, and is required for cell growth at high temperatures. TtuA transfers the S atom from the thiocarboxylated C-terminus of TtuB to tRNA. The protein is tRNA-5-methyluridine(54) 2-sulfurtransferase of Thermus thermophilus (strain ATCC BAA-163 / DSM 7039 / HB27).